Consider the following 235-residue polypeptide: Large ribosomal subunit protein uL1 (235 aa).

This sequence belongs to the universal ribosomal protein uL1 family. Part of the 50S ribosomal subunit.

Functionally, binds directly to 23S rRNA. The L1 stalk is quite mobile in the ribosome, and is involved in E site tRNA release. Protein L1 is also a translational repressor protein, it controls the translation of the L11 operon by binding to its mRNA. This Arthrobacter sp. (strain FB24) protein is Large ribosomal subunit protein uL1.